A 184-amino-acid polypeptide reads, in one-letter code: Ribosome-recycling factor (184 aa).

It belongs to the RRF family.

It is found in the cytoplasm. Responsible for the release of ribosomes from messenger RNA at the termination of protein biosynthesis. May increase the efficiency of translation by recycling ribosomes from one round of translation to another. The polypeptide is Ribosome-recycling factor (Acinetobacter baylyi (strain ATCC 33305 / BD413 / ADP1)).